A 589-amino-acid polypeptide reads, in one-letter code: Aspartate--tRNA(Asp/Asn) ligase (589 aa).

Glu-172 is an L-aspartate binding site. The interval 196 to 199 (QLFK) is aspartate. Arg-218 serves as a coordination point for L-aspartate. Residues 218 to 220 (RDE) and Gln-227 contribute to the ATP site. His-449 serves as a coordination point for L-aspartate. Glu-483 contacts ATP. Arg-490 serves as a coordination point for L-aspartate. ATP is bound at residue 535–538 (GVDR).

The protein belongs to the class-II aminoacyl-tRNA synthetase family. Type 1 subfamily. As to quaternary structure, homodimer.

Its subcellular location is the cytoplasm. It carries out the reaction tRNA(Asx) + L-aspartate + ATP = L-aspartyl-tRNA(Asx) + AMP + diphosphate. In terms of biological role, aspartyl-tRNA synthetase with relaxed tRNA specificity since it is able to aspartylate not only its cognate tRNA(Asp) but also tRNA(Asn). Reaction proceeds in two steps: L-aspartate is first activated by ATP to form Asp-AMP and then transferred to the acceptor end of tRNA(Asp/Asn). The polypeptide is Aspartate--tRNA(Asp/Asn) ligase (Francisella philomiragia subsp. philomiragia (strain ATCC 25017 / CCUG 19701 / FSC 153 / O#319-036)).